A 409-amino-acid polypeptide reads, in one-letter code: MATRSLFHSLRCRLTNNGVLGSNFIRNAESSRFSKSYNADAAIGNSLVEESEEKDDLKSRIFRLRLPKRSATTVLEKWIGEGNQMTINELREISKELRRTRRYKHALEVTEWMVQHEESKISDADYASRIDLISKVFGIDAAERYFEGLDIDSKTAETYTSLLHAYAASKQTERAEALFKRIIESDSLTFGAITYNEMMTLYMSVGQVEKVPEVIEVLKQKKVSPDIFTYNLWLSSCAATFNIDELRKILEEMRHDASSNEGWVRYIDLTSIYINSSRVTNAESTLPVEAEKSISQREWITYDFLMILHTGLGNKVMIDQIWKSLRNTNQILSSRSYICVLSSYLMLGHLREAEEIIHQWKESKTTEFDASACLRILNAFRDVGLEGIASGFHLILVHNKCSLENEGSS.

The transit peptide at 1–38 (MATRSLFHSLRCRLTNNGVLGSNFIRNAESSRFSKSYN) directs the protein to the mitochondrion. PPR repeat units lie at residues 155–189 (TAET…DSLT), 191–225 (GAIT…KVSP), 226–256 (DIFT…MRHD), 262–296 (GWVR…SISQ), 298–332 (EWIT…NQIL), and 333–367 (SSRS…KTTE).

Belongs to the PPR family. P subfamily.

It localises to the mitochondrion. The sequence is that of Pentatricopeptide repeat-containing protein At5g09450, mitochondrial from Arabidopsis thaliana (Mouse-ear cress).